Reading from the N-terminus, the 161-residue chain is Ragulator complex protein LAMTOR1 (161 aa).

Residues 1–43 are disordered; that stretch reads MGCCYSSENEDSDQDREERKLLLDPSSTPTKALNGAEPNYHSL. The N-myristoyl glycine moiety is linked to residue glycine 2. 2 S-palmitoyl cysteine lipidation sites follow: cysteine 3 and cysteine 4. Residue lysine 20 forms a Glycyl lysine isopeptide (Lys-Gly) (interchain with G-Cter in ubiquitin) linkage. Serine 27 bears the Phosphoserine mark. Residue threonine 28 is modified to Phosphothreonine. Residue lysine 31 forms a Glycyl lysine isopeptide (Lys-Gly) (interchain with G-Cter in ubiquitin) linkage. Serine 42 and serine 56 each carry phosphoserine. Residue lysine 60 forms a Glycyl lysine isopeptide (Lys-Gly) (interchain with G-Cter in ubiquitin) linkage. Serine 98 is subject to Phosphoserine. Glycyl lysine isopeptide (Lys-Gly) (interchain with G-Cter in ubiquitin) cross-links involve residues lysine 103 and lysine 104. Residues 121 to 161 are interaction with LAMTOR2 and LAMTOR3; it reads SEPIPFSDLQQVSRIAAYAYSALSQIRVDAKEELVVQFGIP. A Phosphoserine modification is found at serine 141.

Belongs to the LAMTOR1 family. In terms of assembly, part of the Ragulator complex composed of LAMTOR1, LAMTOR2, LAMTOR3, LAMTOR4 and LAMTOR5. LAMTOR4 and LAMTOR5 form a heterodimer that interacts, through LAMTOR1, with a LAMTOR2, LAMTOR3 heterodimer. Interacts with LAMTOR2 and LAMTOR3; the interaction is direct. The Ragulator complex interacts with both the mTORC1 complex and heterodimers constituted of the Rag GTPases RagA/RRAGA, RagB/RRAGB, RagC/RRAGC and RagD/RRAGD; regulated by amino acid availability. The Ragulator complex interacts with SLC38A9; the probable amino acid sensor. Component of the lysosomal folliculin complex (LFC), composed of FLCN, FNIP1 (or FNIP2), RagA/RRAGA or RagB/RRAGB GDP-bound, RagC/RRAGC or RagD/RRAGD GTP-bound, and Ragulator. Associates with the lysosomal V-ATPase complex; interaction promotes the guanine nucleotide exchange factor (GEF) of the Ragulator complex. Interacts with MMP14. Interacts with CDKN1B; prevents the interaction of CDKN1B with RHOA leaving RHOA in a form accessible to activation by ARHGEF2. Interacts with PIP4P1. N-terminal myristoylation and palmitoylation mediates its recruitment to lysosome membranes, thereby promoting localization of the Ragulator complex to lysosomes. N-myristoylation by NMT1 is required for palmitoylation at Cys-3 and Cys-4. Post-translationally, ubiquitinated at Lys-60, Lys-103 and Lys-104 by UBE3A in neurons, promoting its degradation by the proteasome, thereby limiting mTORC1 signaling and activity-dependent synaptic remodeling. Ubiquitination at Lys-20 impairs the association with the lysosomal V-ATPase complex. Deubiquitination at Lys-20 by USP32 promotes the association with the lysosomal V-ATPase complex and subsequent activation of the mTORC1 complex.

The protein localises to the lysosome membrane. It localises to the late endosome membrane. Functionally, key component of the Ragulator complex, a multiprotein complex involved in amino acid sensing and activation of mTORC1, a signaling complex promoting cell growth in response to growth factors, energy levels, and amino acids. Activated by amino acids through a mechanism involving the lysosomal V-ATPase, the Ragulator plays a dual role for the small GTPases Rag (RagA/RRAGA, RagB/RRAGB, RagC/RRAGC and/or RagD/RRAGD): it (1) acts as a guanine nucleotide exchange factor (GEF), activating the small GTPases Rag and (2) mediates recruitment of Rag GTPases to the lysosome membrane. Activated Ragulator and Rag GTPases function as a scaffold recruiting mTORC1 to lysosomes where it is in turn activated. LAMTOR1 is directly responsible for anchoring the Ragulator complex to the lysosomal membrane. LAMTOR1 wraps around the other subunits of the Ragulator complex to hold them in place and interacts with the Rag GTPases, thereby playing a key role in the recruitment of the mTORC1 complex to lysosomes. Also involved in the control of embryonic stem cells differentiation via non-canonical RagC/RRAGC and RagD/RRAGD activation: together with FLCN, it is necessary to recruit and activate RagC/RRAGC and RagD/RRAGD at the lysosomes, and to induce exit of embryonic stem cells from pluripotency via non-canonical, mTOR-independent TFE3 inactivation. Also required for late endosomes/lysosomes biogenesis it may regulate both the recycling of receptors through endosomes and the MAPK signaling pathway through recruitment of some of its components to late endosomes. May be involved in cholesterol homeostasis regulating LDL uptake and cholesterol release from late endosomes/lysosomes. May also play a role in RHOA activation. The sequence is that of Ragulator complex protein LAMTOR1 from Mus musculus (Mouse).